Here is a 278-residue protein sequence, read N- to C-terminus: Potassium/proton antiporter CemA (278 aa).

The next 4 helical transmembrane spans lie at 61-81 (VVFLFIIPVLINQVSKSFLFG), 154-174 (CAITNILADLLSIAIFISILI), 203-223 (IILFTDMFVGFHSPHGWEVII), and 238-258 (FIFVFISTFPVILDTIFKYWI).

It belongs to the CemA family.

The protein resides in the plastid. It is found in the chloroplast inner membrane. The catalysed reaction is K(+)(in) + H(+)(out) = K(+)(out) + H(+)(in). In terms of biological role, contributes to K(+)/H(+) antiport activity by supporting proton efflux to control proton extrusion and homeostasis in chloroplasts in a light-dependent manner to modulate photosynthesis. Prevents excessive induction of non-photochemical quenching (NPQ) under continuous-light conditions. Indirectly promotes efficient inorganic carbon uptake into chloroplasts. In Gracilaria tenuistipitata var. liui (Red alga), this protein is Potassium/proton antiporter CemA.